A 239-amino-acid chain; its full sequence is Purine nucleoside phosphorylase DeoD-type (239 aa).

Residue histidine 5 coordinates a purine D-ribonucleoside. Phosphate contacts are provided by residues glycine 21, arginine 25, arginine 44, and 88–91 (RVGS). A purine D-ribonucleoside contacts are provided by residues 180 to 182 (EME) and 204 to 205 (SD). The active-site Proton donor is the aspartate 205.

Belongs to the PNP/UDP phosphorylase family. In terms of assembly, homohexamer; trimer of homodimers.

It catalyses the reaction a purine D-ribonucleoside + phosphate = a purine nucleobase + alpha-D-ribose 1-phosphate. It carries out the reaction a purine 2'-deoxy-D-ribonucleoside + phosphate = a purine nucleobase + 2-deoxy-alpha-D-ribose 1-phosphate. Its function is as follows. Catalyzes the reversible phosphorolytic breakdown of the N-glycosidic bond in the beta-(deoxy)ribonucleoside molecules, with the formation of the corresponding free purine bases and pentose-1-phosphate. The sequence is that of Purine nucleoside phosphorylase DeoD-type from Pectobacterium atrosepticum (strain SCRI 1043 / ATCC BAA-672) (Erwinia carotovora subsp. atroseptica).